We begin with the raw amino-acid sequence, 693 residues long: MAKEFLIELGTEELPPTQLRTLAEAFAANFEAELKGAELTHEGVKWYAAPRRLALKVTALAEHQADKIVEKRGPAVSAAFDADGNATKAAQGWARGCGITVDQAERMITDKGEWLLFKQEVKGQPTADIVVELAAKALAGLPIAKPMRWGNKTTQFIRPVKTLTMLMGSDLIQGEILGVASDRVIRGHRFMGEREFTIESAEQYPSILEERGKVMADYEARKAIILADAQKAAAAIGGIADLEDDLVEEVTSLVEWPVVLTAKFEEEFLKVPAEALVYTMKGDQKYFPVYTEDKQLLPNFIFVSNIESKEPRYVIEGNEKVVRPRLADAEFFFNTDRKSKLIDRLPMLENAIFQQQLGTIKDKTDRITELAGYIAEQIGADVEKSKRAGLLAKCDLMTSMVFEFTDTQGVMGMHYARHDGEAEEVAVALNEQYMPRFAGDDLPSNGVSSAVAMADKLDTIVGIFGIGQAPKGSDPFALRRASLGVLRIIVEYGYNLDLVDLVAKAKSLFAQQDGTSRLTNDNVEQEVIEFMLGRFRAWYQDEGFSVDIIQAVLARRPTKPADFDQRVKAVSHFRELEAAEALAAANKRVGNILAKFDGELAADIDLALLREDAEKVLAENVEVMTEALEPAFATGNYQEALSKLADLREPVDAFFDNVMVMADDEALKTNRLTLLNNLRNLFLQIADISLLQK.

This sequence belongs to the class-II aminoacyl-tRNA synthetase family. As to quaternary structure, tetramer of two alpha and two beta subunits.

The protein localises to the cytoplasm. The catalysed reaction is tRNA(Gly) + glycine + ATP = glycyl-tRNA(Gly) + AMP + diphosphate. This chain is Glycine--tRNA ligase beta subunit, found in Vibrio vulnificus (strain CMCP6).